Here is a 439-residue protein sequence, read N- to C-terminus: Probable N-acetylmuramidase (439 aa).

The first 57 residues, 1 to 57 (MPVSRIKVKNRHLKKKAKKPLAFYKPATKFAGAVLIAGTLTTTHELLLQQTSPMVQA), serve as a signal peptide directing secretion. 2 disordered regions span residues 218-241 (SAGTSNSGGSTATNTNNNSNTSST) and 287-320 (SSSSSNTNSSTSSGNSAGTTTPTTSVTPAKPASQ). One can recognise a LysM 1 domain in the interval 241-284 (TTYTVKSGDTLWGISQKYGISVAQIQSANNLKSTVIYIGQKLVL). The segment covering 287-319 (SSSSSNTNSSTSSGNSAGTTTPTTSVTPAKPAS) has biased composition (low complexity). The 44-residue stretch at 321-364 (TTIKVKSGDTLWGLSVKYKTTIAQLKSWNHLNSDTIFIGQNLIV) folds into the LysM 2 domain. The segment at 372–393 (SSSTGSSSASTSSTSNSSAASN) is disordered. The LysM 3 domain maps to 395–438 (SIHKVVKGDTLWGLSQKSGSPIASIKAWNHLSSDTILIGQYLRI).

Belongs to the glycosyl hydrolase 73 family.

It localises to the secreted. It carries out the reaction Hydrolysis of (1-&gt;4)-beta-linkages between N-acetylmuramic acid and N-acetyl-D-glucosamine residues in a peptidoglycan and between N-acetyl-D-glucosamine residues in chitodextrins.. Required for cell separation during growth. This Lactococcus lactis subsp. lactis (strain IL1403) (Streptococcus lactis) protein is Probable N-acetylmuramidase (acmA).